Here is a 374-residue protein sequence, read N- to C-terminus: Chaperone protein DnaJ (374 aa).

One can recognise a J domain in the interval 6–70 (DYYDILGVSK…QKRAQYDQFG (65 aa)). The CR-type zinc finger occupies 135–217 (GKKTTIKYSR…CGGTGHTSQQ (83 aa)). Cysteine 148, cysteine 151, cysteine 165, cysteine 168, cysteine 191, cysteine 194, cysteine 205, and cysteine 208 together coordinate Zn(2+). CXXCXGXG motif repeat units lie at residues 148 to 155 (CKTCGGSG), 165 to 172 (CHKCNGTG), 191 to 198 (CDVCNGTG), and 205 to 212 (CPTCGGTG). Disordered regions lie at residues 308-328 (GTNF…GTGD) and 347-374 (EALK…KFMN).

The protein belongs to the DnaJ family. Homodimer. It depends on Zn(2+) as a cofactor.

Its subcellular location is the cytoplasm. Its function is as follows. Participates actively in the response to hyperosmotic and heat shock by preventing the aggregation of stress-denatured proteins and by disaggregating proteins, also in an autonomous, DnaK-independent fashion. Unfolded proteins bind initially to DnaJ; upon interaction with the DnaJ-bound protein, DnaK hydrolyzes its bound ATP, resulting in the formation of a stable complex. GrpE releases ADP from DnaK; ATP binding to DnaK triggers the release of the substrate protein, thus completing the reaction cycle. Several rounds of ATP-dependent interactions between DnaJ, DnaK and GrpE are required for fully efficient folding. Also involved, together with DnaK and GrpE, in the DNA replication of plasmids through activation of initiation proteins. This Pediococcus pentosaceus (strain ATCC 25745 / CCUG 21536 / LMG 10740 / 183-1w) protein is Chaperone protein DnaJ.